Here is a 91-residue protein sequence, read N- to C-terminus: Small ribosomal subunit protein bS6 (91 aa).

It belongs to the bacterial ribosomal protein bS6 family.

Binds together with bS18 to 16S ribosomal RNA. This is Small ribosomal subunit protein bS6 from Leptospira borgpetersenii serovar Hardjo-bovis (strain JB197).